The sequence spans 412 residues: [Pyruvate dehydrogenase (acetyl-transferring)] kinase isozyme 4, mitochondrial (412 aa).

Residues Ile138 to Ser368 enclose the Histidine kinase domain. ATP is bound by residues Glu254 to Arg261, Asp293, Ser312 to Thr313, and Gly329 to Leu334.

This sequence belongs to the PDK/BCKDK protein kinase family. As to quaternary structure, homodimer. Interacts with the pyruvate dehydrogenase complex subunit DLAT, and is part of the multimeric pyruvate dehydrogenase complex that contains multiple copies of pyruvate dehydrogenase (E1), dihydrolipoamide acetyltransferase (DLAT, E2) and lipoamide dehydrogenase (DLD, E3). Detected in heart, white adipose tissue and muscle.

The protein resides in the mitochondrion matrix. It catalyses the reaction L-seryl-[pyruvate dehydrogenase E1 alpha subunit] + ATP = O-phospho-L-seryl-[pyruvate dehydrogenase E1 alpha subunit] + ADP + H(+). Functionally, kinase that plays a key role in regulation of glucose and fatty acid metabolism and homeostasis via phosphorylation of the pyruvate dehydrogenase subunits PDHA1 and PDHA2. This inhibits pyruvate dehydrogenase activity, and thereby regulates metabolite flux through the tricarboxylic acid cycle, down-regulates aerobic respiration and inhibits the formation of acetyl-coenzyme A from pyruvate. Inhibition of pyruvate dehydrogenase decreases glucose utilization and increases fat metabolism in response to prolonged fasting and starvation. Plays an important role in maintaining normal blood glucose levels under starvation, and is involved in the insulin signaling cascade. Via its regulation of pyruvate dehydrogenase activity, plays an important role in maintaining normal blood pH and in preventing the accumulation of ketone bodies under starvation. In the fed state, mediates cellular responses to glucose levels and to a high-fat diet. Regulates both fatty acid oxidation and de novo fatty acid biosynthesis. Plays a role in the generation of reactive oxygen species. Protects detached epithelial cells against anoikis. Plays a role in cell proliferation via its role in regulating carbohydrate and fatty acid metabolism. In Rhinolophus ferrumequinum (Greater horseshoe bat), this protein is [Pyruvate dehydrogenase (acetyl-transferring)] kinase isozyme 4, mitochondrial (PDK4).